The primary structure comprises 278 residues: Shikimate dehydrogenase (NADP(+)) (278 aa).

Shikimate is bound by residues 15–17 (SMS) and threonine 62. Catalysis depends on lysine 66, which acts as the Proton acceptor. NADP(+) is bound at residue glutamate 78. 2 residues coordinate shikimate: asparagine 87 and aspartate 102. NADP(+)-binding positions include 127 to 131 (GAGGA), 151 to 156 (NRTPEK), and isoleucine 217. Tyrosine 219 contributes to the shikimate binding site. Position 240 (glycine 240) interacts with NADP(+).

The protein belongs to the shikimate dehydrogenase family. Homodimer.

The catalysed reaction is shikimate + NADP(+) = 3-dehydroshikimate + NADPH + H(+). It participates in metabolic intermediate biosynthesis; chorismate biosynthesis; chorismate from D-erythrose 4-phosphate and phosphoenolpyruvate: step 4/7. Its function is as follows. Involved in the biosynthesis of the chorismate, which leads to the biosynthesis of aromatic amino acids. Catalyzes the reversible NADPH linked reduction of 3-dehydroshikimate (DHSA) to yield shikimate (SA). This Bacillus licheniformis (strain ATCC 14580 / DSM 13 / JCM 2505 / CCUG 7422 / NBRC 12200 / NCIMB 9375 / NCTC 10341 / NRRL NRS-1264 / Gibson 46) protein is Shikimate dehydrogenase (NADP(+)).